The chain runs to 116 residues: Ribonuclease P protein component (116 aa).

This sequence belongs to the RnpA family. Consists of a catalytic RNA component (M1 or rnpB) and a protein subunit.

The enzyme catalyses Endonucleolytic cleavage of RNA, removing 5'-extranucleotides from tRNA precursor.. Its function is as follows. RNaseP catalyzes the removal of the 5'-leader sequence from pre-tRNA to produce the mature 5'-terminus. It can also cleave other RNA substrates such as 4.5S RNA. The protein component plays an auxiliary but essential role in vivo by binding to the 5'-leader sequence and broadening the substrate specificity of the ribozyme. This chain is Ribonuclease P protein component, found in Carboxydothermus hydrogenoformans (strain ATCC BAA-161 / DSM 6008 / Z-2901).